The sequence spans 150 residues: Flagellar assembly factor FliW (150 aa).

This sequence belongs to the FliW family. In terms of assembly, interacts with translational regulator CsrA and flagellin(s).

The protein resides in the cytoplasm. In terms of biological role, acts as an anti-CsrA protein, binds CsrA and prevents it from repressing translation of its target genes, one of which is flagellin. Binds to flagellin and participates in the assembly of the flagellum. The polypeptide is Flagellar assembly factor FliW (Leptospira borgpetersenii serovar Hardjo-bovis (strain L550)).